The following is a 123-amino-acid chain: Ribosome-binding factor A (123 aa).

This sequence belongs to the RbfA family. As to quaternary structure, monomer. Binds 30S ribosomal subunits, but not 50S ribosomal subunits or 70S ribosomes.

Its subcellular location is the cytoplasm. Its function is as follows. One of several proteins that assist in the late maturation steps of the functional core of the 30S ribosomal subunit. Associates with free 30S ribosomal subunits (but not with 30S subunits that are part of 70S ribosomes or polysomes). Required for efficient processing of 16S rRNA. May interact with the 5'-terminal helix region of 16S rRNA. This Neisseria gonorrhoeae (strain NCCP11945) protein is Ribosome-binding factor A.